The following is a 1134-amino-acid chain: DNA damage-binding protein 1 (1134 aa).

The protein belongs to the DDB1 family. As to quaternary structure, interacts with cdt-1 and cul-4. In terms of tissue distribution, expressed at high levels in the spermatheca of adult hermaphrodites.

Its subcellular location is the cytoplasm. The protein resides in the nucleus. It participates in protein modification; protein ubiquitination. Its function is as follows. Plays a role in DNA repair. May be a component of an E3 ubiquitin-protein ligase which promotes histone ubiquitination in response to UV irradiation. Histone ubiquitination may be important for subsequent DNA repair. Promotes the degradation of the replication licensing factor cdt-1 during S-phase, thereby preventing rereplication of DNA during a single round of cell division. The polypeptide is DNA damage-binding protein 1 (ddb-1) (Caenorhabditis elegans).